The sequence spans 65 residues: Metallothionein-like protein type 3 (65 aa).

The protein belongs to the metallothionein superfamily. Type 15 family.

Metallothioneins have a high content of cysteine residues that bind various heavy metals. The protein is Metallothionein-like protein type 3 of Musa acuminata (Banana).